The following is a 249-amino-acid chain: Chymase (249 aa).

The first 19 residues, 1–19 (MHCLPLTLLLLLLCSRAEA), serve as a signal peptide directing secretion. Residues 20-21 (EE) constitute a propeptide, activation peptide. Positions 22–245 (IIGGTESKPH…YRPWINKVLK (224 aa)) constitute a Peptidase S1 domain. An intrachain disulfide couples cysteine 51 to cysteine 67. Residues histidine 66 and aspartate 110 each act as charge relay system in the active site. Disulfide bonds link cysteine 144–cysteine 209 and cysteine 175–cysteine 188. Serine 203 acts as the Charge relay system in catalysis.

This sequence belongs to the peptidase S1 family. Granzyme subfamily.

The protein localises to the secreted. The protein resides in the cytoplasmic granule. It carries out the reaction Preferential cleavage: Phe-|-Xaa &gt; Tyr-|-Xaa &gt; Trp-|-Xaa &gt; Leu-|-Xaa.. In terms of biological role, major secreted protease of mast cells with suspected roles in vasoactive peptide generation, extracellular matrix degradation, and regulation of gland secretion. The protein is Chymase (CMA1) of Canis lupus familiaris (Dog).